The primary structure comprises 355 residues: UDP-N-acetylglucosamine--N-acetylmuramyl-(pentapeptide) pyrophosphoryl-undecaprenol N-acetylglucosamine transferase (355 aa).

UDP-N-acetyl-alpha-D-glucosamine-binding positions include 14–16 (TGG), Asn126, Arg162, Ser190, Ile243, 262–267 (ALTVSE), and Gln287.

This sequence belongs to the glycosyltransferase 28 family. MurG subfamily.

The protein resides in the cell inner membrane. It carries out the reaction di-trans,octa-cis-undecaprenyl diphospho-N-acetyl-alpha-D-muramoyl-L-alanyl-D-glutamyl-meso-2,6-diaminopimeloyl-D-alanyl-D-alanine + UDP-N-acetyl-alpha-D-glucosamine = di-trans,octa-cis-undecaprenyl diphospho-[N-acetyl-alpha-D-glucosaminyl-(1-&gt;4)]-N-acetyl-alpha-D-muramoyl-L-alanyl-D-glutamyl-meso-2,6-diaminopimeloyl-D-alanyl-D-alanine + UDP + H(+). The protein operates within cell wall biogenesis; peptidoglycan biosynthesis. Functionally, cell wall formation. Catalyzes the transfer of a GlcNAc subunit on undecaprenyl-pyrophosphoryl-MurNAc-pentapeptide (lipid intermediate I) to form undecaprenyl-pyrophosphoryl-MurNAc-(pentapeptide)GlcNAc (lipid intermediate II). The polypeptide is UDP-N-acetylglucosamine--N-acetylmuramyl-(pentapeptide) pyrophosphoryl-undecaprenol N-acetylglucosamine transferase (Vibrio campbellii (strain ATCC BAA-1116)).